Consider the following 100-residue polypeptide: Large ribosomal subunit protein uL23 (100 aa).

The protein belongs to the universal ribosomal protein uL23 family. Part of the 50S ribosomal subunit. Contacts protein L29, and trigger factor when it is bound to the ribosome.

Its function is as follows. One of the early assembly proteins it binds 23S rRNA. One of the proteins that surrounds the polypeptide exit tunnel on the outside of the ribosome. Forms the main docking site for trigger factor binding to the ribosome. The sequence is that of Large ribosomal subunit protein uL23 from Mycobacterium marinum (strain ATCC BAA-535 / M).